The chain runs to 366 residues: Cobalt-precorrin-5B C(1)-methyltransferase (366 aa).

The protein belongs to the CbiD family.

The catalysed reaction is Co-precorrin-5B + S-adenosyl-L-methionine = Co-precorrin-6A + S-adenosyl-L-homocysteine. Its pathway is cofactor biosynthesis; adenosylcobalamin biosynthesis; cob(II)yrinate a,c-diamide from sirohydrochlorin (anaerobic route): step 6/10. In terms of biological role, catalyzes the methylation of C-1 in cobalt-precorrin-5B to form cobalt-precorrin-6A. This is Cobalt-precorrin-5B C(1)-methyltransferase from Pseudomonas paraeruginosa (strain DSM 24068 / PA7) (Pseudomonas aeruginosa (strain PA7)).